The primary structure comprises 119 residues: Large ribosomal subunit protein bL20 (119 aa).

It belongs to the bacterial ribosomal protein bL20 family.

Binds directly to 23S ribosomal RNA and is necessary for the in vitro assembly process of the 50S ribosomal subunit. It is not involved in the protein synthesizing functions of that subunit. The sequence is that of Large ribosomal subunit protein bL20 from Bordetella avium (strain 197N).